The sequence spans 236 residues: tRNA (guanine-N(7)-)-methyltransferase (236 aa).

The segment at 1-23 (MEADVQRAQQAQLEKGSSVPPWT) is disordered. Asp69, Glu94, Asn121, and Asp144 together coordinate S-adenosyl-L-methionine. The active site involves Asp144. Positions 148 and 180 each coordinate substrate.

It belongs to the class I-like SAM-binding methyltransferase superfamily. TrmB family.

The enzyme catalyses guanosine(46) in tRNA + S-adenosyl-L-methionine = N(7)-methylguanosine(46) in tRNA + S-adenosyl-L-homocysteine. Its pathway is tRNA modification; N(7)-methylguanine-tRNA biosynthesis. Functionally, catalyzes the formation of N(7)-methylguanine at position 46 (m7G46) in tRNA. The protein is tRNA (guanine-N(7)-)-methyltransferase of Synechococcus sp. (strain JA-3-3Ab) (Cyanobacteria bacterium Yellowstone A-Prime).